Here is a 504-residue protein sequence, read N- to C-terminus: GTPase Der (504 aa).

The 164-residue stretch at 3-166 (PVVALVGRPN…QVLAPLAEKL (164 aa)) folds into the EngA-type G 1 domain. GTP-binding positions include 9 to 16 (GRPNVGKS), 56 to 60 (DTGGI), and 118 to 121 (NKTD). Residues 171–190 (VDSDENVADDEQDEWDSDFD) form a disordered region. Positions 172-190 (DSDENVADDEQDEWDSDFD) are enriched in acidic residues. Positions 216-389 (IKIAIVGRPN…SIQEAYQCAT (174 aa)) constitute an EngA-type G 2 domain. GTP-binding positions include 222–229 (GRPNVGKS), 269–273 (DTAGV), and 334–337 (NKWD). The 85-residue stretch at 390–474 (KKMTTSMLTR…PIRVLFQEGN (85 aa)) folds into the KH-like domain.

This sequence belongs to the TRAFAC class TrmE-Era-EngA-EngB-Septin-like GTPase superfamily. EngA (Der) GTPase family. In terms of assembly, associates with the 50S ribosomal subunit.

Its function is as follows. GTPase that plays an essential role in the late steps of ribosome biogenesis. The chain is GTPase Der from Glaesserella parasuis serovar 5 (strain SH0165) (Haemophilus parasuis).